A 201-amino-acid polypeptide reads, in one-letter code: Large ribosomal subunit protein bL9 (201 aa).

Basic and acidic residues predominate over residues 150–165; that stretch reads EAERQAAGEDLTQRRD. Residues 150–201 are disordered; sequence EAERQAAGEDLTQRRDDEEEEAVEAAEFFESEELAPGDEEEEAAGEEEDAKE. Acidic residues predominate over residues 166-201; the sequence is DEEEEAVEAAEFFESEELAPGDEEEEAAGEEEDAKE.

Belongs to the bacterial ribosomal protein bL9 family.

In terms of biological role, binds to the 23S rRNA. In Parvibaculum lavamentivorans (strain DS-1 / DSM 13023 / NCIMB 13966), this protein is Large ribosomal subunit protein bL9.